A 296-amino-acid chain; its full sequence is MKLIPIILNAKNLSGMAGSISICCWIVVFVPQIYENFRRQSAEGLSLLFIVLWLLGDIFNVMGAMMQNLLPTMIILAAYYTLADLILLIQCMWYDKEKKSILQEVKKNVDPVHLPPANPINETVLQDVFNEYEPLLPRIEEEDSQSYSSLELGRTIVVKERENFFNDFLIVSGVLIAGILSWYISYCSGLDNGIPKKKPAFEQINLPAQILGYLSAILYLGSRIPQIVLNFKRKSCEGVSFLFFLFACLGNTSFIISVLSASWLIGSAGTLLMDFTVFIQFFLYAKPKYEKILIDN.

At M1 to N12 the chain is on the vacuolar side. In terms of domain architecture, PQ-loop 1 spans A10–L76. Residues L13 to I33 form a helical membrane-spanning segment. The Cytoplasmic segment spans residues Y34 to G44. Residues L45–M65 form a helical membrane-spanning segment. Over M66–N68 the chain is Vacuolar. A helical transmembrane segment spans residues L69–I89. Topologically, residues Q90 to N163 are cytoplasmic. Residues F164–I184 traverse the membrane as a helical segment. At S185 to P199 the chain is on the vacuolar side. A helical transmembrane segment spans residues A200–L220. One can recognise a PQ-loop 2 domain in the interval A208–T270. The Cytoplasmic segment spans residues G221–G238. Residues V239–L259 traverse the membrane as a helical segment. Residues S260–S262 are Vacuolar-facing. Residues W263–L283 traverse the membrane as a helical segment. Residues Y284–N296 are Cytoplasmic-facing.

Belongs to the laat-1 family.

Its subcellular location is the vacuole membrane. The protein localises to the mitochondrion membrane. In terms of biological role, amino acid transporter that moves histidine into the vacuole. May also contribute to low affinity arginine import into the vacuole. May function as an amino acid/proton antiporter. This is Vacuolar histidine transporter YPQ3 from Saccharomyces cerevisiae (strain ATCC 204508 / S288c) (Baker's yeast).